We begin with the raw amino-acid sequence, 209 residues long: MSGKKRTASSNRWMLEHFDDHYVKLAQKRGLRSRAAFKLEELQQKDQLIRPGMTVVDLGAAPGGWSQVAVKLVGDRGKVIACDILPMDPIVGVDFLQGDFREEKVLEALLTRVGADKVDVVLSDMAPNMSGSDGVDQPRAMYLVELALDMCHQVLAPNGSFAVKVFQGEGFDEYMKAVKEAFKVVKTRKPDSSRARSREVYLVATGYKL.

S-adenosyl-L-methionine-binding residues include glycine 63, tryptophan 65, aspartate 83, aspartate 99, and aspartate 124. Lysine 164 (proton acceptor) is an active-site residue.

It belongs to the class I-like SAM-binding methyltransferase superfamily. RNA methyltransferase RlmE family.

It localises to the cytoplasm. The enzyme catalyses uridine(2552) in 23S rRNA + S-adenosyl-L-methionine = 2'-O-methyluridine(2552) in 23S rRNA + S-adenosyl-L-homocysteine + H(+). Specifically methylates the uridine in position 2552 of 23S rRNA at the 2'-O position of the ribose in the fully assembled 50S ribosomal subunit. The polypeptide is Ribosomal RNA large subunit methyltransferase E (Shewanella putrefaciens (strain CN-32 / ATCC BAA-453)).